The chain runs to 225 residues: UPF0758 protein Ping_0056 (225 aa).

Positions 103–225 (ALTSAAQTKA…CTSFAENGWI (123 aa)) constitute an MPN domain. Positions 174, 176, and 187 each coordinate Zn(2+). The short motif at 174–187 (HNHPSGDPSASEAD) is the JAMM motif element.

Belongs to the UPF0758 family.

The polypeptide is UPF0758 protein Ping_0056 (Psychromonas ingrahamii (strain DSM 17664 / CCUG 51855 / 37)).